Consider the following 802-residue polypeptide: Pyrophosphate-energized membrane proton pump 2 (802 aa).

A run of 6 helical transmembrane segments spans residues 45 to 65 (VLSI…ASTS), 66 to 86 (PIIV…IYLT), 118 to 138 (YSTI…IYLF), 160 to 180 (VAAF…GMWV), 206 to 226 (AGGF…AILY), and 246 to 266 (LPLL…FAQL). Lys-273 is a substrate binding site. Residues Asp-276, Asp-280, and Asp-306 each coordinate Mg(2+). Helical transmembrane passes span 348–368 (FILF…IGIL), 386–406 (MAVL…TFGA), 421–441 (WFNF…FVWI), 468–488 (IIAG…TISV), and 511–531 (GGLF…AYVL). Mg(2+)-binding residues include Asp-541 and Asn-568. 4 helical membrane passes run 577 to 597 (FAIG…MDEV), 615 to 635 (VFVG…WACA), 686 to 706 (GALA…LGYY), and 716 to 736 (VVAS…LFLN). Positions 743 and 773 each coordinate Mg(2+). Lys-776 contacts substrate. Residues 782 to 802 (SIHVLIKMLATITLVMAPVFL) traverse the membrane as a helical segment.

This sequence belongs to the H(+)-translocating pyrophosphatase (TC 3.A.10) family. K(+)-insensitive subfamily. Monomer. In terms of tissue distribution, ubiquitous. Mostly expressed in cotyledons, roots and flowers. Especially high levels in trichomes, sepals and stamen filaments.

It localises to the golgi apparatus membrane. It carries out the reaction diphosphate + H2O + H(+)(in) = 2 phosphate + 2 H(+)(out). With respect to regulation, activated by Mg(+) but not by K(+). Inhibited by Ca(2+). Its function is as follows. Pyrophosphatase active in both inorganic pyrophosphate hydrolysis and H(+) translocation. This Arabidopsis thaliana (Mouse-ear cress) protein is Pyrophosphate-energized membrane proton pump 2 (AVPL1).